A 271-amino-acid polypeptide reads, in one-letter code: MPPTVFIVSDGTGITAETFAHSILSQFDQKFRLVRVPFVDSTEKAYATLEKINEAIVQDGRRPIVFTTLVDSASNQIVKGSNALVLDMFQTFVEPLEQELELKSSHAMGRGHQNADTEEYKNRIEAINFSLAHDDGQSNRNLADADVILVGVSRSGKTPTSLYLAMQYGVKAANYPLIPEDFERGKLPTPLLAHRQKMFGLSIDPQRLSEIRNERRPGSKYAAPENCRYEINEAEAMMRREGIKWLSSTHKSIEEIATTILQEIKLDRPSY.

151-158 is a binding site for ADP; it reads GVSRSGKT.

It belongs to the pyruvate, phosphate/water dikinase regulatory protein family. PSRP subfamily.

The enzyme catalyses [pyruvate, water dikinase] + ADP = [pyruvate, water dikinase]-phosphate + AMP + H(+). It catalyses the reaction [pyruvate, water dikinase]-phosphate + phosphate + H(+) = [pyruvate, water dikinase] + diphosphate. Functionally, bifunctional serine/threonine kinase and phosphorylase involved in the regulation of the phosphoenolpyruvate synthase (PEPS) by catalyzing its phosphorylation/dephosphorylation. The sequence is that of Putative phosphoenolpyruvate synthase regulatory protein from Paraburkholderia phytofirmans (strain DSM 17436 / LMG 22146 / PsJN) (Burkholderia phytofirmans).